We begin with the raw amino-acid sequence, 128 residues long: Ribosome-binding factor A (128 aa).

The protein belongs to the RbfA family. Monomer. Binds 30S ribosomal subunits, but not 50S ribosomal subunits or 70S ribosomes.

The protein resides in the cytoplasm. One of several proteins that assist in the late maturation steps of the functional core of the 30S ribosomal subunit. Associates with free 30S ribosomal subunits (but not with 30S subunits that are part of 70S ribosomes or polysomes). Required for efficient processing of 16S rRNA. May interact with the 5'-terminal helix region of 16S rRNA. The protein is Ribosome-binding factor A of Saccharophagus degradans (strain 2-40 / ATCC 43961 / DSM 17024).